The following is a 394-amino-acid chain: Putative transporter AraJ (394 aa).

The Cytoplasmic segment spans residues 1 to 4 (MKKV). The helical transmembrane segment at 5–27 (ILSLALGTFGLGMAEFGIMGVLT) threads the bilayer. Topologically, residues 28–41 (ELAHNVGISIPAAG) are periplasmic. The chain crosses the membrane as a helical span at residues 42–63 (HMISYYALGVVVGAPIIALFSS). Over 64 to 69 (RYSLKH) the chain is Cytoplasmic. The chain crosses the membrane as a helical span at residues 70–89 (ILLFLVALCVIGNAMFTLSS). The Periplasmic segment spans residues 90–93 (SYLM). Residues 94–116 (LAIGRLVSGFPHGAFFGVGAIVL) traverse the membrane as a helical segment. Topologically, residues 117-128 (SKIIKPGKVTAA) are cytoplasmic. A helical transmembrane segment spans residues 129–151 (VAGMVSGMTVANLLGIPLGTYLS). Residues 152–155 (QEFS) are Periplasmic-facing. The helical transmembrane segment at 156-178 (WRYTFLLIAVFNIAVMASVYFWV) threads the bilayer. Topologically, residues 179–198 (PDIRDEAKGNLREQFHFLRS) are cytoplasmic. A helical transmembrane segment spans residues 199-221 (PAPWLIFAATMFGNAGVFAWFSY). Residues 222 to 235 (VKPYMMFISGFSET) lie on the Periplasmic side of the membrane. The helical transmembrane segment at 236 to 255 (AMTFIMMLVGLGMVLGNMLS) threads the bilayer. Residues 256-261 (GRISGR) lie on the Cytoplasmic side of the membrane. Residues 262 to 284 (YSPLRIAAVTDFIIVLALLMLFF) traverse the membrane as a helical segment. Topologically, residues 285-293 (CGGMKTTSL) are periplasmic. A helical transmembrane segment spans residues 294 to 316 (IFAFICCAGLFALSAPLQILLLQ). Residues 317–322 (NAKGGE) are Cytoplasmic-facing. A helical transmembrane segment spans residues 323-342 (LLGAAGGQIAFNLGSAVGAY). Residues 343-351 (CGGMMLTLG) lie on the Periplasmic side of the membrane. Residues 352–374 (LAYNYVALPAALLSFAAMSSLLL) form a helical membrane-spanning segment. Residues 375–394 (YGRYKRQQAADTPVLAKPLG) are Cytoplasmic-facing.

The protein belongs to the major facilitator superfamily.

The protein localises to the cell inner membrane. Functionally, may be involved in either the transport or processing of arabinose polymers. The protein is Putative transporter AraJ (araJ) of Escherichia coli (strain K12).